Consider the following 59-residue polypeptide: Small, acid-soluble spore protein H (59 aa).

This sequence belongs to the SspH family.

The protein localises to the spore core. The chain is Small, acid-soluble spore protein H from Alkaliphilus metalliredigens (strain QYMF).